Consider the following 379-residue polypeptide: Succinyl-diaminopimelate desuccinylase (379 aa).

Zn(2+) is bound at residue histidine 70. Aspartate 72 is an active-site residue. Aspartate 103 is a Zn(2+) binding site. The Proton acceptor role is filled by glutamate 137. Zn(2+) is bound by residues glutamate 138, glutamate 166, and histidine 352.

Belongs to the peptidase M20A family. DapE subfamily. Homodimer. It depends on Zn(2+) as a cofactor. Co(2+) serves as cofactor.

It carries out the reaction N-succinyl-(2S,6S)-2,6-diaminopimelate + H2O = (2S,6S)-2,6-diaminopimelate + succinate. It functions in the pathway amino-acid biosynthesis; L-lysine biosynthesis via DAP pathway; LL-2,6-diaminopimelate from (S)-tetrahydrodipicolinate (succinylase route): step 3/3. Its function is as follows. Catalyzes the hydrolysis of N-succinyl-L,L-diaminopimelic acid (SDAP), forming succinate and LL-2,6-diaminopimelate (DAP), an intermediate involved in the bacterial biosynthesis of lysine and meso-diaminopimelic acid, an essential component of bacterial cell walls. This Shewanella sp. (strain W3-18-1) protein is Succinyl-diaminopimelate desuccinylase.